A 227-amino-acid polypeptide reads, in one-letter code: Uridylate kinase (227 aa).

11 to 12 lines the ATP pocket; sequence GS. Glycine 45 contacts UMP. The ATP site is built by glycine 46 and arginine 50. UMP is bound by residues aspartate 67 and 114–120; that span reads TEPGHTT. ATP contacts are provided by threonine 140, tyrosine 146, and aspartate 149.

The protein belongs to the UMP kinase family. In terms of assembly, homohexamer.

The protein resides in the cytoplasm. It carries out the reaction UMP + ATP = UDP + ADP. The protein operates within pyrimidine metabolism; CTP biosynthesis via de novo pathway; UDP from UMP (UMPK route): step 1/1. Its activity is regulated as follows. Inhibited by UTP. Functionally, catalyzes the reversible phosphorylation of UMP to UDP. The chain is Uridylate kinase from Thermoplasma volcanium (strain ATCC 51530 / DSM 4299 / JCM 9571 / NBRC 15438 / GSS1).